Reading from the N-terminus, the 176-residue chain is Jacalin-related lectin 19 (176 aa).

Positions 12–154 (TVFVGPWGGN…LDSIGFHLSR (143 aa)) constitute a Jacalin-type lectin domain.

It belongs to the jacalin lectin family.

This chain is Jacalin-related lectin 19 (JAL19), found in Arabidopsis thaliana (Mouse-ear cress).